A 489-amino-acid polypeptide reads, in one-letter code: Betaine aldehyde dehydrogenase (489 aa).

Threonine 26 and aspartate 93 together coordinate K(+). Residue 150 to 152 (GAW) coordinates NAD(+). Lysine 162 acts as the Charge relay system in catalysis. Position 176 to 179 (176 to 179 (KPSE)) interacts with NAD(+). Isoleucine 180 contacts K(+). Residue 229–232 (GVET) participates in NAD(+) binding. Residue leucine 245 coordinates K(+). The active-site Proton acceptor is the glutamate 251. Residues glycine 253, cysteine 285, and glutamate 386 each contribute to the NAD(+) site. The active-site Nucleophile is the cysteine 285. Cysteine 285 is modified (cysteine sulfenic acid (-SOH)). Lysine 456 and glycine 459 together coordinate K(+). Glutamate 463 functions as the Charge relay system in the catalytic mechanism.

It belongs to the aldehyde dehydrogenase family. In terms of assembly, dimer of dimers. Requires K(+) as cofactor.

The enzyme catalyses betaine aldehyde + NAD(+) + H2O = glycine betaine + NADH + 2 H(+). It functions in the pathway amine and polyamine biosynthesis; betaine biosynthesis via choline pathway; betaine from betaine aldehyde: step 1/1. Its function is as follows. Involved in the biosynthesis of the osmoprotectant glycine betaine. Catalyzes the irreversible oxidation of betaine aldehyde to the corresponding acid. This chain is Betaine aldehyde dehydrogenase, found in Paraburkholderia xenovorans (strain LB400).